Reading from the N-terminus, the 467-residue chain is MAHVEVLARLQKETKCPICLDDLTDPVTVECGHNFCRSCIKDFWAGQQATSSCPVCRHQCQHRNLRSNAQLGNMIETAQLLQGMENKRHESSTSCERHNQALTLFCEDDLQLLCDQCVEPESHGRHQVLSITEAASLHRKHLQDYSKLLKWEVKEIQGLMSALNKRTVTLREQAEAQRSQLTSECEKLMRFLDQEERAAFSRLEDEEMRLEKRLLDNIAALEHHGSSLRDLLRHLMLTGELSEAKMLSTVKDFYLNCRRQLISPSIFPVQLRRVEYSFPLQYSALQKVIQHFTDNVTLDLKTAHPNLLISKDRTCVTFTKKRQRIPGSSSFTKSPVVLGIPHFNSGRHFWEVQVGKKPKWAIGICKADSSIGERQSPNPWGYWRIVWQGDSFNVSGADPDSRLKAARATSIGVFLDYELGEVSFYGMPEKCHLYTFRDTFSGPVCPYFYIGPQSEPLRLCSATDSEC.

The RING-type zinc-finger motif lies at C16–R57. The B box-type zinc-finger motif lies at E90–I131. Zn(2+) contacts are provided by C95, H98, C117, and H123. The stretch at V168 to E222 forms a coiled coil. Residues Y276–E466 form the B30.2/SPRY domain.

The protein belongs to the TRIM/RBCC family.

It localises to the cytoplasm. The protein resides in the cytoskeleton. The protein localises to the spindle. In terms of biological role, may play a role in female meiosis. This is Tripartite motif-containing protein 75 from Mus musculus (Mouse).